Consider the following 282-residue polypeptide: Pantothenate synthetase (282 aa).

Position 26 to 33 (26 to 33 (MGNLHEGH)) interacts with ATP. Catalysis depends on His33, which acts as the Proton donor. A (R)-pantoate-binding site is contributed by Gln57. Gln57 contacts beta-alanine. 144–147 (GQKD) serves as a coordination point for ATP. Gln150 contributes to the (R)-pantoate binding site. Residues Leu173 and 181–184 (LSSR) contribute to the ATP site.

This sequence belongs to the pantothenate synthetase family. As to quaternary structure, homodimer.

It is found in the cytoplasm. It carries out the reaction (R)-pantoate + beta-alanine + ATP = (R)-pantothenate + AMP + diphosphate + H(+). The protein operates within cofactor biosynthesis; (R)-pantothenate biosynthesis; (R)-pantothenate from (R)-pantoate and beta-alanine: step 1/1. Its function is as follows. Catalyzes the condensation of pantoate with beta-alanine in an ATP-dependent reaction via a pantoyl-adenylate intermediate. This chain is Pantothenate synthetase, found in Albidiferax ferrireducens (strain ATCC BAA-621 / DSM 15236 / T118) (Rhodoferax ferrireducens).